The chain runs to 116 residues: Large ribosomal subunit protein uL18 (116 aa).

This sequence belongs to the universal ribosomal protein uL18 family. As to quaternary structure, part of the 50S ribosomal subunit; part of the 5S rRNA/L5/L18/L25 subcomplex. Contacts the 5S and 23S rRNAs.

In terms of biological role, this is one of the proteins that bind and probably mediate the attachment of the 5S RNA into the large ribosomal subunit, where it forms part of the central protuberance. In Shewanella frigidimarina (strain NCIMB 400), this protein is Large ribosomal subunit protein uL18.